We begin with the raw amino-acid sequence, 233 residues long: LexA repressor (233 aa).

The segment at residues 26–46 is a DNA-binding region (H-T-H motif); sequence FEEMKEALDLKSKSGVHRLIS. Active-site for autocatalytic cleavage activity residues include Ser-153 and Lys-191.

This sequence belongs to the peptidase S24 family. In terms of assembly, homodimer.

The enzyme catalyses Hydrolysis of Ala-|-Gly bond in repressor LexA.. In terms of biological role, represses a number of genes involved in the response to DNA damage (SOS response), including recA and lexA. In the presence of single-stranded DNA, RecA interacts with LexA causing an autocatalytic cleavage which disrupts the DNA-binding part of LexA, leading to derepression of the SOS regulon and eventually DNA repair. The protein is LexA repressor of Erythrobacter litoralis (strain HTCC2594).